Here is a 468-residue protein sequence, read N- to C-terminus: Pituitary adenylate cyclase-activating polypeptide type I receptor (468 aa).

The first 20 residues, 1–20 (MAGVVHVSLAALLLLPMAPA), serve as a signal peptide directing secretion. The Extracellular portion of the chain corresponds to 21 to 152 (MHSDCIFKKE…TGDQDYYYLS (132 aa)). Intrachain disulfides connect cysteine 34/cysteine 63, cysteine 54/cysteine 118, and cysteine 77/cysteine 134. Residues asparagine 48, asparagine 60, and asparagine 117 are each glycosylated (N-linked (GlcNAc...) asparagine). An important for ADCYAP1/PACAP ligand binding and specificity region spans residues 125–139 (EPFPHYFDACGFDEY). The chain crosses the membrane as a helical span at residues 153 to 177 (VKALYTVGYSTSLVTLTTAMVILCR). At 178-187 (FRKLHCTRNF) the chain is on the cytoplasmic side. A helical membrane pass occupies residues 188–208 (IHMNLFVSFMLRAISVFIKDW). Residues 209 to 223 (ILYAEQDSNHCFIST) are Extracellular-facing. A helical transmembrane segment spans residues 224–249 (VECKAVMVFFHYCVVSNYFWLFIEGL). Cysteine 226 and cysteine 296 are oxidised to a cystine. The Cytoplasmic segment spans residues 250–267 (YLFTLLVETFFPERRYFY). Residues 268–290 (WYTIIGWGTPTVCVTVWATLRLY) form a helical membrane-spanning segment. At 291–302 (FDDTGCWDMNDS) the chain is on the extracellular side. Asparagine 300 is a glycosylation site (N-linked (GlcNAc...) asparagine). A helical transmembrane segment spans residues 303–329 (TALWWVIKGPVVGSIMVNFVLFIGIIV). At 330-347 (ILVQKLQSPDMGGNESSI) the chain is on the cytoplasmic side. The helical transmembrane segment at 348–374 (YLRLARSTLLLIPLFGIHYTVFAFSPE) threads the bilayer. N-linked (GlcNAc...) asparagine glycosylation is present at asparagine 375. Topologically, residues 375-379 (NVSKR) are extracellular. Residues 380 to 403 (ERLVFELGLGSFQGFVVAVLYCFL) traverse the membrane as a helical segment. Residues 404–468 (NGEVQAEIKR…SGLPADNLAT (65 aa)) are Cytoplasmic-facing. Phosphoserine is present on residues serine 434 and serine 447.

It belongs to the G-protein coupled receptor 2 family. As to quaternary structure, interacts with maxadilan, a vasodilator peptide from Lutzomyia longipalpis saliva; the interaction results in ADCYAP1R1 activation. As to expression, most abundant in the brain, low expression in the lung, liver, thymus, spleen, pancreas and placenta.

The protein localises to the cell membrane. Its activity is regulated as follows. Several synthetic peptides derived from maxadilan, a vasodilator peptide from Lutzomyia longipalpis saliva, act as antagonists for ADCYAP1R1. In terms of biological role, g protein-coupled receptor activated by the neuropeptide pituitary adenylate cyclase-activating polypeptide (ADCYAP1/PACAP). Binds both PACAP27 and PACAP38 bioactive peptides. Ligand binding causes a conformation change that triggers signaling via guanine nucleotide-binding proteins (G proteins) and modulates the activity of downstream effectors. Activates cAMP-dependent pathway. May regulate the release of adrenocorticotropin, luteinizing hormone, growth hormone, prolactin, epinephrine, and catecholamine. May play a role in spermatogenesis and sperm motility. Causes smooth muscle relaxation and secretion in the gastrointestinal tract. This Homo sapiens (Human) protein is Pituitary adenylate cyclase-activating polypeptide type I receptor.